The following is a 204-amino-acid chain: LexA repressor (204 aa).

Positions 31–51 (VREIGQAVGLKSSSTVHTHLV) form a DNA-binding region, H-T-H motif. Catalysis depends on for autocatalytic cleavage activity residues serine 128 and lysine 165.

It belongs to the peptidase S24 family. Homodimer.

It carries out the reaction Hydrolysis of Ala-|-Gly bond in repressor LexA.. Functionally, represses a number of genes involved in the response to DNA damage (SOS response), including recA and lexA. In the presence of single-stranded DNA, RecA interacts with LexA causing an autocatalytic cleavage which disrupts the DNA-binding part of LexA, leading to derepression of the SOS regulon and eventually DNA repair. This chain is LexA repressor, found in Syntrophomonas wolfei subsp. wolfei (strain DSM 2245B / Goettingen).